A 128-amino-acid chain; its full sequence is Glycine cleavage system H protein (128 aa).

Residues 24–106 enclose the Lipoyl-binding domain; sequence VYSVGITEHA…YTDGWLFSIK (83 aa). An N6-lipoyllysine modification is found at Lys-65.

The protein belongs to the GcvH family. In terms of assembly, the glycine cleavage system is composed of four proteins: P, T, L and H. The cofactor is (R)-lipoate.

The glycine cleavage system catalyzes the degradation of glycine. The H protein shuttles the methylamine group of glycine from the P protein to the T protein. This is Glycine cleavage system H protein from Yersinia enterocolitica serotype O:8 / biotype 1B (strain NCTC 13174 / 8081).